The following is a 331-amino-acid chain: Vitamin B12 import system permease protein BtuC (331 aa).

A run of 9 helical transmembrane segments spans residues 20 to 42 (VMLAVLLVLSALYLMVGEVFLSP), 62 to 84 (LVAAMVIGAALAVSGATLQVLLG), 91 to 113 (GVLGISGGASLAMVIALFLLPVM), 117 to 136 (TVFMLAAIIGALVFTLILVG), 148 to 170 (MLLVGVALGILSGAFVTWAFYFS), 190 to 209 (SWHHHLVTLVLLPVLVWLCL), 240 to 262 (LAISILIGCAVALGGIISFVGLV), 277 to 296 (FLLPLSAFAGATLLVFSDIW), and 303 to 325 (SAELPLGVMTTTIGAPIFIWMLI).

The protein belongs to the binding-protein-dependent transport system permease family. FecCD subfamily. The complex is composed of two ATP-binding proteins (BtuD), two transmembrane proteins (BtuC) and a solute-binding protein (BtuF).

It is found in the cell inner membrane. Part of the ABC transporter complex BtuCDF involved in vitamin B12 import. Involved in the translocation of the substrate across the membrane. The polypeptide is Vitamin B12 import system permease protein BtuC (Vibrio vulnificus (strain CMCP6)).